A 1487-amino-acid chain; its full sequence is Collagen alpha-1(II) chain (1487 aa).

The signal sequence occupies residues 1–25 (MIRLGAPQTLVLLTLLVAAVLRCQG). Positions 26–181 (QDVQEAGSCV…PPGLGGNFAA (156 aa)) are cleaved as a propeptide — N-terminal propeptide. The VWFC domain maps to 32-90 (GSCVQDGQRYNDKDVWKPEPCRICVCDTGTVLCDDIICEDVKDCLSPEIPFGECCPICP). A disordered region spans residues 97–1237 (SGQPGPKGQK…PREKGPDPLQ (1141 aa)). Composition is skewed to basic and acidic residues over residues 105 to 116 (QKGEPGDIKDIV) and 133 to 154 (PRGD…RDGE). A compositionally biased stretch (pro residues) spans 158–173 (PGNPGPPGPPGPPGPP). Position 190 is a 5-hydroxylysine (Lys-190). An O-linked (Gal...) hydroxylysine glycan is attached at Lys-190. The segment at 201–1214 (GPMGPMGPRG…PGPPGPPGPP (1014 aa)) is triple-helical region. Residues 208-217 (PRGPPGPAGA) are compositionally biased toward pro residues. Residues 218–239 (PGPQGFQGNPGEPGEPGVSGPM) show a composition bias toward low complexity. Positions 241-250 (PRGPPGPPGK) are enriched in pro residues. A compositionally biased stretch (basic and acidic residues) spans 251–265 (PGDDGEAGKPGKAGE). Residues Lys-287, Lys-299, and Lys-308 each carry the 5-hydroxylysine modification. Lys-287, Lys-299, and Lys-308 each carry an O-linked (Gal...) hydroxylysine glycan. Low complexity-rich tracts occupy residues 310–320 (ESGSPGENGSP) and 335–350 (TGPA…DGQP). The segment covering 360 to 369 (GPAGGPGFPG) has biased composition (gly residues). Composition is skewed to low complexity over residues 370 to 382 (APGA…PTGA) and 391 to 431 (PRGE…AGAP). Lys-374 is modified (5-hydroxylysine). Residue Lys-374 is glycosylated (O-linked (Gal...) hydroxylysine). Pro residues predominate over residues 433-442 (FPGPRGPPGP). 2 positions are modified to 5-hydroxylysine: Lys-608 and Lys-620. 2 O-linked (Gal...) hydroxylysine glycosylation sites follow: Lys-608 and Lys-620. Low complexity-rich tracts occupy residues 622–631 (LPGAPGLRGL) and 656–667 (QGAPGPSGFQGL). 4-hydroxyproline occurs at positions 659 and 668. A 3-hydroxyproline modification is found at Pro-670. 4-hydroxyproline occurs at positions 671 and 674. Positions 764 to 775 (KGDRGDVGEKGP) are enriched in basic and acidic residues. 2 stretches are compositionally biased toward low complexity: residues 833–848 (AGFA…PGAK) and 877–913 (PTGV…SNGN). Pro-907 is subject to 3-hydroxyproline. Residues Pro-908, Pro-914, and Pro-920 each carry the 4-hydroxyproline modification. The segment covering 1069–1079 (APGPPGSPGPA) has biased composition (pro residues). The span at 1115–1129 (RGDKGEAGEPGERGL) shows a compositional bias: basic and acidic residues. Lys-1130 is modified (5-hydroxylysine). O-linked (Gal...) hydroxylysine glycosylation occurs at Lys-1130. At Pro-1144 the chain carries 3-hydroxyproline. Residues 1148 to 1157 (SGDQGASGPA) show a composition bias toward low complexity. The residue at position 1181 (Pro-1181) is a 4-hydroxyproline. Pro-1186 is modified (3-hydroxyproline). Pro-1187 is subject to 4-hydroxyproline. The segment covering 1199 to 1216 (AGPPGNPGPPGPPGPPGP) has biased composition (pro residues). Pro-1201 carries the post-translational modification 3-hydroxyproline. A 4-hydroxyproline mark is found at Pro-1202 and Pro-1205. Pro-1207 bears the 3-hydroxyproline mark. 4-hydroxyproline occurs at positions 1208 and 1211. Pro-1213 bears the 3-hydroxyproline mark. The residue at position 1214 (Pro-1214) is a 4-hydroxyproline. Residues 1215 to 1241 (GPGIDMSAFAGLGPREKGPDPLQYMRA) are nonhelical region (C-terminal). A Fibrillar collagen NC1 domain is found at 1253–1487 (AEVDATLKSL…GVDIGPVCFL (235 aa)). 3 disulfides stabilise this stretch: Cys-1283–Cys-1315, Cys-1323–Cys-1485, and Cys-1393–Cys-1438. Residues Asp-1301, Asn-1303, Gln-1304, Cys-1306, and Asp-1309 each coordinate Ca(2+). The N-linked (GlcNAc...) asparagine glycan is linked to Asn-1388.

This sequence belongs to the fibrillar collagen family. Homotrimers of alpha 1(II) chains. Post-translationally, the N-telopeptide is covalently linked to the helical COL2 region of alpha 1(IX), alpha 2(IX) and alpha 3(IX) chain. The C-telopeptide is covalently linked to an another site in the helical region of alpha 3(IX) COL2. Contains mostly 4-hydroxyproline. Prolines at the third position of the tripeptide repeating unit (G-X-P) are 4-hydroxylated in some or all of the chains. In terms of processing, contains 3-hydroxyproline at a few sites. This modification occurs on the first proline residue in the sequence motif Gly-Pro-Hyp, where Hyp is 4-hydroxyproline. Post-translationally, lysine residues at the third position of the tripeptide repeating unit (G-X-Y) are 5-hydroxylated in some or all of the chains. O-glycosylated on hydroxylated lysine residues. The O-linked glycan consists of a Glc-Gal disaccharide. Isoform 2 is highly expressed in juvenile chondrocyte and low in fetal chondrocyte.

The protein localises to the secreted. It localises to the extracellular space. The protein resides in the extracellular matrix. Type II collagen is specific for cartilaginous tissues. It is essential for the normal embryonic development of the skeleton, for linear growth and for the ability of cartilage to resist compressive forces. The protein is Collagen alpha-1(II) chain of Homo sapiens (Human).